A 298-amino-acid chain; its full sequence is TLR adapter interacting with SLC15A4 on the lysosome (298 aa).

The short motif at 287-291 (SLHIS) is the pLxIS motif element. Serine 291 bears the Phosphoserine mark.

As to quaternary structure, interacts (via pLxIS motif) with IRF5; leading to IRF5 activation. Interacts with SLC15A4; leading to its recruitment to endolysosome. In terms of processing, the phosphorylated pLxIS motif constitutes an IRF5-binding motif, leading to recruitment of the transcription factor IRF5 to induce type-I interferons and other cytokines.

It localises to the lysosome membrane. The protein localises to the endosome membrane. It is found in the nucleus. Its subcellular location is the cytoplasm. Its function is as follows. Innate immune adapter that mediates the recruitment and activation of IRF5 downstream of endolysosomal toll-like receptors TLR7, TLR8 and TLR9. Following recruitment to endolysosome by SLC15A4 downstream of TLR7, TLR8 and TLR9, specifically recruits IRF5 transcription factor via its pLxIS motif, leading to IRF5 activation and subsequent expression of type I interferons. Plays a role in the regulation of endolysosomal pH in immune cells such as B-cells, dendritic cells and monocytes. The chain is TLR adapter interacting with SLC15A4 on the lysosome from Mus musculus (Mouse).